The primary structure comprises 312 residues: tRNA uridine(34) hydroxylase (312 aa).

A Rhodanese domain is found at 124–218 (SDPEVLLIDT…YLEEVPEQES (95 aa)). Cys178 (cysteine persulfide intermediate) is an active-site residue. The segment at 293-312 (AKARNQPHPIGRNYRLPSEA) is disordered.

Belongs to the TrhO family.

It carries out the reaction uridine(34) in tRNA + AH2 + O2 = 5-hydroxyuridine(34) in tRNA + A + H2O. Catalyzes oxygen-dependent 5-hydroxyuridine (ho5U) modification at position 34 in tRNAs. The polypeptide is tRNA uridine(34) hydroxylase (Pseudomonas syringae pv. syringae (strain B728a)).